A 748-amino-acid chain; its full sequence is Transcription factor hmgR (748 aa).

Residues 24 to 59 (CISCRQRKAKCDLGTGPDGLPLGPPCAKCRREQKPC) constitute a DNA-binding region (zn(2)-C6 fungal-type). Disordered stretches follow at residues 108 to 142 (SQED…QIDL) and 661 to 683 (REST…DEHA).

Its subcellular location is the nucleus. Its function is as follows. Transcription factor; part of the L-tyrosine degradation gene cluster that mediates the biosynthesis of the brownish pigment pyomelanin as an alternative melanin. Acts as a transcriptional activator for the genes of the tyrosine degradation cluster. This Aspergillus fumigatus (strain ATCC MYA-4609 / CBS 101355 / FGSC A1100 / Af293) (Neosartorya fumigata) protein is Transcription factor hmgR.